Reading from the N-terminus, the 279-residue chain is Ribosomal RNA small subunit methyltransferase A (279 aa).

Histidine 10, leucine 12, glycine 37, glutamate 58, aspartate 83, and asparagine 108 together coordinate S-adenosyl-L-methionine.

Belongs to the class I-like SAM-binding methyltransferase superfamily. rRNA adenine N(6)-methyltransferase family. RsmA subfamily.

The protein resides in the cytoplasm. It catalyses the reaction adenosine(1518)/adenosine(1519) in 16S rRNA + 4 S-adenosyl-L-methionine = N(6)-dimethyladenosine(1518)/N(6)-dimethyladenosine(1519) in 16S rRNA + 4 S-adenosyl-L-homocysteine + 4 H(+). Functionally, specifically dimethylates two adjacent adenosines (A1518 and A1519) in the loop of a conserved hairpin near the 3'-end of 16S rRNA in the 30S particle. May play a critical role in biogenesis of 30S subunits. The chain is Ribosomal RNA small subunit methyltransferase A from Synechococcus elongatus (strain ATCC 33912 / PCC 7942 / FACHB-805) (Anacystis nidulans R2).